The chain runs to 456 residues: Acyl-CoA transferase FPSE_08120 (456 aa).

A mitochondrion-targeting transit peptide spans 1–33 (MARLLFSGQRLRPSFLRSYIRANPSSTPSATRA).

This sequence belongs to the CoA-transferase III family.

The protein localises to the mitochondrion. Functionally, acyl-CoA transferase; part of the Fusarium detoxification of benzoxazolinone cluster involved in the degradation of benzoxazolinones produced by the host plant. Maize, wheat, and rye produce the 2 benzoxazinone phytoanticipins 2,4-dihy-droxy-7-methoxy-1,4-benzoxazin-3-one (DIMBOA) and 2,4-dihydroxy-1,4-benzoxazin-3-one (DIBOA) that, due to their inherent instability once released, spontaneously degrade to the more stable corresponding benzoxazolinones, 6-methoxy-2-benzoxazolinone (MBOA) and 2-benzoxazolinone (BOA), respectively. The first step in the detoxification of benzoxazolinones involves the hydrolysis of the cyclic ester bond of benzoxazolinones by the gamma-lactamase FDB1 to aminophenols. FDB1 is able to convert 2-benzoxazolinone (BOA) into 2-aminophenol (2-AP), as well as 6-methoxy-2-benzoxazolinone (MBOA) into 5-methoxy-2-aminophenol (2-AMP). The N-malonyltransferase FDB2 then metabolizes aminophenols via N-malonylation to non-toxic malonamic acids. FDB2 converts 2-AP into N-(2-hydroxyphenyl) malonamic acid (HPMA) and 2-AMP into N-(2-hydroxy-4-methoxyphenyl) malonamic acid (HMPMA). The cluster also contains 2 transcription factors (FDB3 and FPSE_08121), an aldo-keto reductase (FPSE_08125) that possibly associates with a ketone component of BOA and MBOA degradation, an esterase (FPSE_08126), an acyl-CoA transferase (FPSE_08120), a solute carrier protein (FPSE_08119) and a transmembrane transporter (FPSE_08127) proposed to shuttle metabolites of benzoxazolinone degradation. In Fusarium pseudograminearum (strain CS3096) (Wheat and barley crown-rot fungus), this protein is Acyl-CoA transferase FPSE_08120.